Here is a 513-residue protein sequence, read N- to C-terminus: Type-2 serine--tRNA ligase (513 aa).

Position 312 (Ala-312) interacts with L-serine. Cys-314 lines the Zn(2+) pocket. Arg-344 is a binding site for L-serine. ATP is bound by residues 344–346 (RWE) and 355–356 (RV). 361-363 (RVE) is an L-serine binding site. Zn(2+)-binding residues include Glu-363 and Cys-467. An ATP-binding site is contributed by Arg-474.

This sequence belongs to the class-II aminoacyl-tRNA synthetase family. Type-2 seryl-tRNA synthetase subfamily. Homodimer. Zn(2+) serves as cofactor.

The protein resides in the cytoplasm. It catalyses the reaction tRNA(Ser) + L-serine + ATP = L-seryl-tRNA(Ser) + AMP + diphosphate + H(+). The enzyme catalyses tRNA(Sec) + L-serine + ATP = L-seryl-tRNA(Sec) + AMP + diphosphate + H(+). It participates in aminoacyl-tRNA biosynthesis; selenocysteinyl-tRNA(Sec) biosynthesis; L-seryl-tRNA(Sec) from L-serine and tRNA(Sec): step 1/1. Functionally, catalyzes the attachment of serine to tRNA(Ser). Is also able to aminoacylate tRNA(Sec) with serine, to form the misacylated tRNA L-seryl-tRNA(Sec), which will be further converted into selenocysteinyl-tRNA(Sec). In Methanothermobacter thermautotrophicus (strain ATCC 29096 / DSM 1053 / JCM 10044 / NBRC 100330 / Delta H) (Methanobacterium thermoautotrophicum), this protein is Type-2 serine--tRNA ligase (serS).